Here is a 507-residue protein sequence, read N- to C-terminus: ATP synthase subunit alpha, chloroplastic (507 aa).

170–177 (GDRQTGKT) serves as a coordination point for ATP.

This sequence belongs to the ATPase alpha/beta chains family. In terms of assembly, F-type ATPases have 2 components, CF(1) - the catalytic core - and CF(0) - the membrane proton channel. CF(1) has five subunits: alpha(3), beta(3), gamma(1), delta(1), epsilon(1). CF(0) has four main subunits: a, b, b' and c.

It is found in the plastid. Its subcellular location is the chloroplast thylakoid membrane. The catalysed reaction is ATP + H2O + 4 H(+)(in) = ADP + phosphate + 5 H(+)(out). Functionally, produces ATP from ADP in the presence of a proton gradient across the membrane. The alpha chain is a regulatory subunit. The sequence is that of ATP synthase subunit alpha, chloroplastic from Nandina domestica (Heavenly bamboo).